An 84-amino-acid polypeptide reads, in one-letter code: M-zodatoxin-Lt2a (84 aa).

Positions 1–22 (MKYFVIALALAVALVCIAESTA) are cleaved as a signal peptide. The propeptide occupies 23 to 58 (YEVNEELENELDDLDDAAWLAVAEELQGLEDFEESR). The Processing quadruplet motif motif lies at 55 to 58 (EESR).

Cleavage of the propeptide depends on the processing quadruplet motif (XXXR, with at least one of X being E). In terms of tissue distribution, expressed by the venom gland.

The protein localises to the secreted. Functionally, it has antimicrobial activity against Gram-positive bacteria (A.globiformis VKM Ac-1112 (MIC=0.7 uM), and B.subtilis VKM B-501 (MIC=0.4 uM)), Gram-negative bacteria (E.coli DH5-alpha (MIC=1.0 uM), E.coli MH1 (MIC=0.7 uM), and P.aeruginosa PAO1 (MIC=6.7 uM)), and yeasts (P.pastoris GS115 (MIC=6.7 uM), and S.cerevisiae Y190 (MIC=54 uM)). Also has a strong hemolytic activity against rabbit erythrocytes. Causes paralysis, but is not lethal when injected into insect (M.domestica) larvae. The chain is M-zodatoxin-Lt2a from Lachesana tarabaevi (Spider).